The chain runs to 316 residues: 4-hydroxy-3-methylbut-2-enyl diphosphate reductase (316 aa).

Position 17 (C17) interacts with [4Fe-4S] cluster. 2 residues coordinate (2E)-4-hydroxy-3-methylbut-2-enyl diphosphate: H46 and H79. Residues H46 and H79 each contribute to the dimethylallyl diphosphate site. The isopentenyl diphosphate site is built by H46 and H79. C101 provides a ligand contact to [4Fe-4S] cluster. H129 contacts (2E)-4-hydroxy-3-methylbut-2-enyl diphosphate. H129 contacts dimethylallyl diphosphate. H129 is a binding site for isopentenyl diphosphate. The active-site Proton donor is E131. T170 contacts (2E)-4-hydroxy-3-methylbut-2-enyl diphosphate. A [4Fe-4S] cluster-binding site is contributed by C200. (2E)-4-hydroxy-3-methylbut-2-enyl diphosphate is bound by residues S228, S229, N230, and S273. Dimethylallyl diphosphate contacts are provided by S228, S229, N230, and S273. 4 residues coordinate isopentenyl diphosphate: S228, S229, N230, and S273.

This sequence belongs to the IspH family. [4Fe-4S] cluster serves as cofactor.

It carries out the reaction isopentenyl diphosphate + 2 oxidized [2Fe-2S]-[ferredoxin] + H2O = (2E)-4-hydroxy-3-methylbut-2-enyl diphosphate + 2 reduced [2Fe-2S]-[ferredoxin] + 2 H(+). The catalysed reaction is dimethylallyl diphosphate + 2 oxidized [2Fe-2S]-[ferredoxin] + H2O = (2E)-4-hydroxy-3-methylbut-2-enyl diphosphate + 2 reduced [2Fe-2S]-[ferredoxin] + 2 H(+). It functions in the pathway isoprenoid biosynthesis; dimethylallyl diphosphate biosynthesis; dimethylallyl diphosphate from (2E)-4-hydroxy-3-methylbutenyl diphosphate: step 1/1. It participates in isoprenoid biosynthesis; isopentenyl diphosphate biosynthesis via DXP pathway; isopentenyl diphosphate from 1-deoxy-D-xylulose 5-phosphate: step 6/6. Its function is as follows. Catalyzes the conversion of 1-hydroxy-2-methyl-2-(E)-butenyl 4-diphosphate (HMBPP) into a mixture of isopentenyl diphosphate (IPP) and dimethylallyl diphosphate (DMAPP). Acts in the terminal step of the DOXP/MEP pathway for isoprenoid precursor biosynthesis. The polypeptide is 4-hydroxy-3-methylbut-2-enyl diphosphate reductase (Roseobacter denitrificans (strain ATCC 33942 / OCh 114) (Erythrobacter sp. (strain OCh 114))).